The following is a 950-amino-acid chain: Zinc finger CCCH domain-containing protein 3 (950 aa).

Disordered stretches follow at residues 32-106 (GNSS…HPEP), 127-182 (IKPP…TKVG), 201-220 (VVKSVGRVSDSSPEHRRTVS), and 314-489 (SEKS…VLRK). Basic residues predominate over residues 56–74 (RPSRRGFSSHHGPSWRKKY). Residues 76-96 (LVNQPVESSDPASDPAFQTSL) are compositionally biased toward polar residues. Over residues 327-338 (PRTTLESGNKAT) the composition is skewed to polar residues. The span at 344 to 360 (KTEKPQPKVDPEVRPEK) shows a compositional bias: basic and acidic residues. A compositionally biased stretch (low complexity) spans 370–388 (SPSKYKWKASSPSASSSSS). The span at 402–412 (SQLSPVPSRPT) shows a compositional bias: polar residues. Ser-405 is modified (phosphoserine). The segment covering 438 to 449 (VKSRTKIIRRRG) has biased composition (basic residues). Residues 460–470 (SPTTATTSKNH) show a composition bias toward polar residues. 5 consecutive C3H1-type zinc fingers follow at residues 662–690 (EKKREYCMYYNRFGRCNRGECCPYIHDPE), 694–717 (VCTRFVRGTCKKTDGSCPFSHHVS), 718–744 (KEKMPVCSYFLKGICSNSNCPYSHVYV), 745–772 (SRKAEVCSDFLKGYCPLGAKCKKKHTLL), and 773–795 (CPDFARRGICPRGSQCQLLHRNQ). The segment at 793 to 950 (RNQKRHGRRT…GKPLHIKPRL (158 aa)) is disordered. Positions 828-838 (PTTTQRSVRQM) are enriched in polar residues. Residues 839–849 (SSGLASGAEAP) are compositionally biased toward low complexity. Phosphoserine is present on residues Ser-851 and Ser-855. The segment covering 857 to 888 (RVLASTSTLSSKATAASSPSPSPSTSSPAPSL) has biased composition (low complexity). Over residues 914 to 928 (SLHSSPSPGGQTETG) the composition is skewed to polar residues. Residues Ser-918, Ser-920, and Ser-934 each carry the phosphoserine modification.

Interacts with SMAD1, SMAD3, SMAD4, CPSF2 and CPSF3.

It is found in the nucleus. Functionally, required for the export of polyadenylated mRNAs from the nucleus. Enhances ACVR1B-induced SMAD-dependent transcription. Binds to single-stranded DNA but not to double-stranded DNA in vitro. Involved in RNA cleavage. The chain is Zinc finger CCCH domain-containing protein 3 (Zc3h3) from Mus musculus (Mouse).